Here is an 82-residue protein sequence, read N- to C-terminus: Small ribosomal subunit protein uS17 (82 aa).

The protein belongs to the universal ribosomal protein uS17 family. In terms of assembly, part of the 30S ribosomal subunit.

Its function is as follows. One of the primary rRNA binding proteins, it binds specifically to the 5'-end of 16S ribosomal RNA. The protein is Small ribosomal subunit protein uS17 of Rhodopseudomonas palustris (strain HaA2).